Here is a 340-residue protein sequence, read N- to C-terminus: Biotin synthase (340 aa).

Residues 45 to 272 form the Radical SAM core domain; that stretch reads NAVQVSTLLS…ASYVRLSAGR (228 aa). C60, C64, and C67 together coordinate [4Fe-4S] cluster. Residues C104, C135, C195, and R267 each contribute to the [2Fe-2S] cluster site.

Belongs to the radical SAM superfamily. Biotin synthase family. As to quaternary structure, homodimer. It depends on [4Fe-4S] cluster as a cofactor. The cofactor is [2Fe-2S] cluster.

The enzyme catalyses (4R,5S)-dethiobiotin + (sulfur carrier)-SH + 2 reduced [2Fe-2S]-[ferredoxin] + 2 S-adenosyl-L-methionine = (sulfur carrier)-H + biotin + 2 5'-deoxyadenosine + 2 L-methionine + 2 oxidized [2Fe-2S]-[ferredoxin]. It participates in cofactor biosynthesis; biotin biosynthesis; biotin from 7,8-diaminononanoate: step 2/2. In terms of biological role, catalyzes the conversion of dethiobiotin (DTB) to biotin by the insertion of a sulfur atom into dethiobiotin via a radical-based mechanism. The polypeptide is Biotin synthase (Thioalkalivibrio sulfidiphilus (strain HL-EbGR7)).